The primary structure comprises 336 residues: Ferrochelatase (336 aa).

Positions 206 and 287 each coordinate Fe cation.

It belongs to the ferrochelatase family.

It is found in the cytoplasm. It catalyses the reaction heme b + 2 H(+) = protoporphyrin IX + Fe(2+). The protein operates within porphyrin-containing compound metabolism; protoheme biosynthesis; protoheme from protoporphyrin-IX: step 1/1. Its function is as follows. Catalyzes the ferrous insertion into protoporphyrin IX. In Neisseria gonorrhoeae (strain ATCC 700825 / FA 1090), this protein is Ferrochelatase.